Consider the following 285-residue polypeptide: Phosphatase YwpJ (285 aa).

The active-site Nucleophile is D7. D7 serves as a coordination point for Mg(2+). Position 8 (L8) interacts with phosphate. D9 serves as a coordination point for Mg(2+). Residues 41-42 and K214 contribute to the phosphate site; that span reads TG. Mg(2+) contacts are provided by D237 and S238. Phosphate is bound by residues N240 and 282-283; that span reads KH.

This sequence belongs to the HAD-like hydrolase superfamily. Cof family. Mg(2+) is required as a cofactor.

Catalyzes the dephosphorylation of phosphorylated 5-6 carbon sugars and monophosphate nucleotides (NMP) in vitro. To a lesser extent, dephosphorylates flavin mononucleotide (FMN) in vitro. This Bacillus subtilis (strain 168) protein is Phosphatase YwpJ (ywpJ).